Here is a 217-residue protein sequence, read N- to C-terminus: Photosynthetic NDH subunit of lumenal location 4, chloroplastic (217 aa).

A chloroplast-targeting transit peptide spans 1-34 (MAISTLTLTQSLYTRSFRPTIFFSSSSSSSFSCL). 2 cysteine pairs are disulfide-bonded: C87/C99 and C188/C193. The 100-residue stretch at 112 to 211 (GVLVNIHYTA…LYDINFVEIY (100 aa)) folds into the PPIase FKBP-type domain.

Belongs to the FKBP-type PPIase family. Part of the chloroplast NDH complex, composed of a mixture of chloroplast and nucleus encoded subunits. Component of the NDH lumenal subcomplex, at least composed of PnsL1, PnsL2, PnsL3, PnsL4 and PnsL5.

Its subcellular location is the plastid. It localises to the chloroplast thylakoid lumen. The catalysed reaction is [protein]-peptidylproline (omega=180) = [protein]-peptidylproline (omega=0). Functionally, NDH shuttles electrons from NAD(P)H:plastoquinone, via FMN and iron-sulfur (Fe-S) centers, to quinones in the photosynthetic chain and possibly in a chloroplast respiratory chain. The immediate electron acceptor for the enzyme in this species is believed to be plastoquinone. Couples the redox reaction to proton translocation, and thus conserves the redox energy in a proton gradient. PPIases accelerate the folding of proteins. It catalyzes the cis-trans isomerization of proline imidic peptide bonds in oligopeptides. Seems to be essential for stabilizing the NDH subcomplex A. In Arabidopsis thaliana (Mouse-ear cress), this protein is Photosynthetic NDH subunit of lumenal location 4, chloroplastic.